The sequence spans 239 residues: Phosphoribosylaminoimidazole-succinocarboxamide synthase (239 aa).

The protein belongs to the SAICAR synthetase family.

It catalyses the reaction 5-amino-1-(5-phospho-D-ribosyl)imidazole-4-carboxylate + L-aspartate + ATP = (2S)-2-[5-amino-1-(5-phospho-beta-D-ribosyl)imidazole-4-carboxamido]succinate + ADP + phosphate + 2 H(+). It participates in purine metabolism; IMP biosynthesis via de novo pathway; 5-amino-1-(5-phospho-D-ribosyl)imidazole-4-carboxamide from 5-amino-1-(5-phospho-D-ribosyl)imidazole-4-carboxylate: step 1/2. The sequence is that of Phosphoribosylaminoimidazole-succinocarboxamide synthase from Shouchella clausii (strain KSM-K16) (Alkalihalobacillus clausii).